A 152-amino-acid chain; its full sequence is ADP-ribose glycohydrolase OARD1 (152 aa).

At A2 the chain carries N-acetylalanine. In terms of domain architecture, Macro spans 2 to 152 (ASSLNEDPEG…TDIKITVYTL (151 aa)). The residue at position 4 (S4) is a Phosphoserine. A substrate-binding site is contributed by L21. K84 (nucleophile) is an active-site residue. Residues 119 to 125 (RIGCGLD) and L152 each bind substrate. The active-site Proton acceptor is the D125.

Ubiquitous.

The protein resides in the nucleus. Its subcellular location is the nucleoplasm. It is found in the nucleolus. The protein localises to the chromosome. The catalysed reaction is 2''-O-acetyl-ADP-D-ribose + H2O = ADP-D-ribose + acetate + H(+). It carries out the reaction 5-O-(ADP-D-ribosyl)-L-glutamyl-[protein] + H2O = L-glutamyl-[protein] + ADP-D-ribose + H(+). It catalyses the reaction alpha-NAD(+) + H2O = ADP-D-ribose + nicotinamide + H(+). With respect to regulation, subject to competitive inhibition by the product ADP-ribose. Its function is as follows. ADP-ribose glycohydrolase that hydrolyzes ADP-ribose and acts on different substrates, such as proteins ADP-ribosylated on glutamate and O-acetyl-ADP-D-ribose. Specifically acts as a glutamate mono-ADP-ribosylhydrolase by mediating the removal of mono-ADP-ribose attached to glutamate residues on proteins. Does not act on poly-ADP-ribosylated proteins: the poly-ADP-ribose chain of poly-ADP-ribosylated glutamate residues must by hydrolyzed into mono-ADP-ribosylated glutamate by PARG to become a substrate for OARD1. Deacetylates O-acetyl-ADP ribose, a signaling molecule generated by the deacetylation of acetylated lysine residues in histones and other proteins. Catalyzes the deacylation of O-acetyl-ADP-ribose, O-propionyl-ADP-ribose and O-butyryl-ADP-ribose, yielding ADP-ribose plus acetate, propionate and butyrate, respectively. The chain is ADP-ribose glycohydrolase OARD1 from Homo sapiens (Human).